Consider the following 341-residue polypeptide: MNVEEFDYDLPESLIAQTPLKDRDQSRLLVLGRNSGNIEHKHFKDVINYLETGDTLVLNDTRVMPARLFGLKEETGAKVEMLMLTRIENNDWEVLLKPAKRIKVGNKLSFGEGKIIAECIEELDQGGRIMRLHYEGILEERLNELGEMPLPPYIKERLDDPDRYQTVYAKESGSAAAPTAGLHFTDELLDEIRAKGINIAFITLHVGLGTFRPVSVEDINDHEMHSEYYQMTQETANLLNQTKKEGHRIISVGTTSTRTLETIRRDYNEFVAVSGWTDIFIYPGFTYKAIDGLITNFHLPKSTLVMLVSAFSSRENILNAYKEAVKLEYRFFSFGDAMLII.

Belongs to the QueA family. As to quaternary structure, monomer.

Its subcellular location is the cytoplasm. It catalyses the reaction 7-aminomethyl-7-carbaguanosine(34) in tRNA + S-adenosyl-L-methionine = epoxyqueuosine(34) in tRNA + adenine + L-methionine + 2 H(+). It functions in the pathway tRNA modification; tRNA-queuosine biosynthesis. Transfers and isomerizes the ribose moiety from AdoMet to the 7-aminomethyl group of 7-deazaguanine (preQ1-tRNA) to give epoxyqueuosine (oQ-tRNA). In Staphylococcus haemolyticus (strain JCSC1435), this protein is S-adenosylmethionine:tRNA ribosyltransferase-isomerase.